The following is a 205-amino-acid chain: Adenylate kinase (205 aa).

Residue 10–15 (GAGKGT) participates in ATP binding. Residues 30 to 59 (STGDMLRAAVAQGSEVGKVAEGIMARGELV) form an NMP region. AMP-binding positions include Thr-31, Arg-36, 57-59 (ELV), 85-88 (GFPR), and Gln-92. The segment at 126–139 (TRAAETAGGPRADD) is LID. ATP is bound at residue Arg-127. AMP contacts are provided by Arg-136 and Arg-147. Lys-175 is an ATP binding site.

The protein belongs to the adenylate kinase family. In terms of assembly, monomer.

It is found in the cytoplasm. The catalysed reaction is AMP + ATP = 2 ADP. It functions in the pathway purine metabolism; AMP biosynthesis via salvage pathway; AMP from ADP: step 1/1. Its function is as follows. Catalyzes the reversible transfer of the terminal phosphate group between ATP and AMP. Plays an important role in cellular energy homeostasis and in adenine nucleotide metabolism. This Parvibaculum lavamentivorans (strain DS-1 / DSM 13023 / NCIMB 13966) protein is Adenylate kinase.